A 165-amino-acid chain; its full sequence is Shikimate kinase (165 aa).

ATP is bound at residue 11–16; sequence GAGKTT. Residue T15 coordinates Mg(2+). Residues D33, R57, and G78 each contribute to the substrate site. Residue R116 participates in ATP binding. R134 is a substrate binding site.

This sequence belongs to the shikimate kinase family. As to quaternary structure, monomer. Mg(2+) serves as cofactor.

It localises to the cytoplasm. The enzyme catalyses shikimate + ATP = 3-phosphoshikimate + ADP + H(+). It participates in metabolic intermediate biosynthesis; chorismate biosynthesis; chorismate from D-erythrose 4-phosphate and phosphoenolpyruvate: step 5/7. In terms of biological role, catalyzes the specific phosphorylation of the 3-hydroxyl group of shikimic acid using ATP as a cosubstrate. This chain is Shikimate kinase, found in Bacillus cereus (strain G9842).